The sequence spans 224 residues: Cysteine S-methyltransferase NleE (224 aa).

The tract at residues 49-52 (GITR) is interaction with host proteins TAB2, TAB3 and ZRANB3. S-adenosyl-L-methionine contacts are provided by Ala-92, Ser-98, Arg-107, Gln-111, Tyr-204, and Glu-208.

Belongs to the NleE/OspZ family. As to quaternary structure, monomer.

It is found in the secreted. The protein resides in the host nucleus. It carries out the reaction L-cysteinyl-[protein] + S-adenosyl-L-methionine = S-methyl-L-cysteinyl-[protein] + S-adenosyl-L-homocysteine + H(+). Its function is as follows. Cysteine methyltransferase effector that inhibits host cell NF-kappa-B activation by preventing nuclear translocation of host protein RELA/p65. Acts by mediating cysteine methylation of host proteins TAB2 and TAB3: methylation of a conserved cysteine residue of the RanBP2-type zinc finger (NZF) of TAB2 and TAB3 disrupts zinc-binding, thereby inactivating the ubiquitin chain-binding activity of TAB2 and TAB3, leading to NF-kappa-B inactivation. Also mediates cysteine methylation of host protein ZRANB3, inactivating its ability to bind ubiquitin chains. This chain is Cysteine S-methyltransferase NleE, found in Escherichia coli O127:H6 (strain E2348/69 / EPEC).